A 288-amino-acid polypeptide reads, in one-letter code: Transmembrane protein 163 (288 aa).

Over residues 1-11 (MERAPGSERRS) the composition is skewed to basic and acidic residues. Residues 1–64 (MERAPGSERR…ESGQFSDGFE (64 aa)) form a disordered region. Over 1 to 87 (MERAPGSERR…HEAQNYRKKA (87 aa)) the chain is Cytoplasmic. The residue at position 11 (S11) is a Phosphoserine. Positions 12–24 (PPGPGVPRPPPRG) are enriched in pro residues. Positions 25–42 (HAPSTAAPAPNPAPLSSS) are enriched in low complexity. The tract at residues 41–71 (SSMQPDEERQPRISESGQFSDGFEDRGLLES) is required for interaction with MCOLN1. S54, S56, and S60 each carry phosphoserine. The helical transmembrane segment at 88 to 108 (LWVSWLSIIVTLALAVAAFTV) threads the bilayer. At 109 to 115 (SVMRYSA) the chain is on the extracellular side. A helical membrane pass occupies residues 116–136 (SAFGFAFDAILDVLSSAIVLW). Residues 137 to 149 (RYSNAAAVHSAHR) lie on the Cytoplasmic side of the membrane. A helical membrane pass occupies residues 150–170 (EYIACVILGVIFLLSSICIVV). At 171–186 (KAIHDLSTRLLPEVDD) the chain is on the extracellular side. A helical membrane pass occupies residues 187–207 (FLFSVSILSGILCSVLAVLKF). At 208–216 (MLGKVLTSR) the chain is on the cytoplasmic side. The helical transmembrane segment at 217–237 (ALITDGFNSLVGGVMGFSILL) threads the bilayer. The Extracellular portion of the chain corresponds to 238-254 (SAEVFKHNAAVWYLDGS). Residues 255–275 (IGVLIGLTIFAYGVKLLIDMV) form a helical membrane-spanning segment. Residues 276–288 (PRVRQTRHYEMFE) lie on the Cytoplasmic side of the membrane.

This sequence belongs to the TMEM163 family. Homodimer. Interacts with MCOLN1. Interacts with SLC30A1, SLC30A2, SLC30A3 and SLC30A4. Strongly expressed in brain. Also detected in lung, liver, kidney and spleen. Mainly expressed in the glutaminergic neuron subpopulations.

It is found in the cytoplasmic vesicle. The protein localises to the secretory vesicle. Its subcellular location is the synaptic vesicle membrane. The protein resides in the early endosome membrane. It localises to the late endosome membrane. It is found in the lysosome membrane. The protein localises to the cell membrane. It catalyses the reaction Zn(2+)(in) = Zn(2+)(out). Functionally, zinc ion transporter that mediates zinc efflux and plays a crucial role in intracellular zinc homeostasis. Binds the divalent cations Zn(2+), Ni(2+), and to a minor extent Cu(2+). Is a functional modulator of P2X purinoceptors, including P2RX1, P2RX3, P2RX4 and P2RX7. Plays a role in central nervous system development and is required for myelination, and survival and proliferation of oligodendrocytes. The chain is Transmembrane protein 163 (Tmem163) from Rattus norvegicus (Rat).